The following is a 134-amino-acid chain: Flagellar basal-body rod protein FlgC (134 aa).

Belongs to the flagella basal body rod proteins family. As to quaternary structure, the basal body constitutes a major portion of the flagellar organelle and consists of four rings (L,P,S, and M) mounted on a central rod. The rod consists of about 26 subunits of FlgG in the distal portion, and FlgB, FlgC and FlgF are thought to build up the proximal portion of the rod with about 6 subunits each.

The protein resides in the bacterial flagellum basal body. The sequence is that of Flagellar basal-body rod protein FlgC (flgC) from Escherichia coli O157:H7.